Reading from the N-terminus, the 399-residue chain is MAEGDFKNDSTGCIGDSVEFTTFKKRTGKSLGNRRKKRGLSGWEPYFQEPELTAEEKLENETLYSRNIPLTVRMERFIQRYRSRRKWSDPTRIRLFTMYLDLGGVSTGQKQFTGGTDINNDAKAREVSAQTTTDYIEYDILDEYDIDFKWVAGVFLSSHILYNAGLTKEEDLQIACQIVRNFLLSVLHNNVAPEFEDNIRDACLLAEQAETELISNKRLSTKLPGRLQRALASIHVDNYKGLWDKSQSDRTSDSSVNFIESNNTKFMPNDELFEPDGISRFSTQQARDYIQRTLGPRYLTGKVVEQEYLTVKLVSKTLLNFSNQSLCKAVFIVWDPPGSKYSQDTNKERLEVILESDLLNNTVDGTHLEGSFTFLDNGLTILDTVLAVLPTFYEEVKDE.

In terms of assembly, component of the argonaute siRNA chaperone (ARC) complex composed of ago1, arb1 and arb2. Interacts with ago1.

It is found in the nucleus. The protein localises to the cytoplasm. In terms of biological role, component of the argonaute siRNA chaperone (ARC) complex which is required for histone H3K9 methylation, heterochromatin assembly and siRNA generation. The ARC complex contains mostly double-stranded siRNA. Inhibits the release of the siRNA passenger strand from ago1 together with arb2. Inhibits the slicer activity of ago1. Required for swi6 localization to the centromeric repeats. This chain is Argonaute-binding protein 1 (arb1), found in Schizosaccharomyces pombe (strain 972 / ATCC 24843) (Fission yeast).